The chain runs to 100 residues: NADH-quinone oxidoreductase subunit K 2 (100 aa).

3 helical membrane-spanning segments follow: residues 4–24 (LHSYLILSAILFSIGTIGVLI), 29–49 (IVIFMCVEMMLNSVNLTFIAL), and 60–80 (IFVFFVMTVAAAEAAVGLALM).

Belongs to the complex I subunit 4L family. As to quaternary structure, NDH-1 is composed of 14 different subunits. Subunits NuoA, H, J, K, L, M, N constitute the membrane sector of the complex.

The protein localises to the cell inner membrane. The enzyme catalyses a quinone + NADH + 5 H(+)(in) = a quinol + NAD(+) + 4 H(+)(out). Its function is as follows. NDH-1 shuttles electrons from NADH, via FMN and iron-sulfur (Fe-S) centers, to quinones in the respiratory chain. The immediate electron acceptor for the enzyme in this species is believed to be ubiquinone. Couples the redox reaction to proton translocation (for every two electrons transferred, four hydrogen ions are translocated across the cytoplasmic membrane), and thus conserves the redox energy in a proton gradient. The protein is NADH-quinone oxidoreductase subunit K 2 of Geobacter metallireducens (strain ATCC 53774 / DSM 7210 / GS-15).